A 282-amino-acid polypeptide reads, in one-letter code: Caspase-3 (282 aa).

Active-site residues include histidine 131 and cysteine 174.

This sequence belongs to the peptidase C14A family. In terms of assembly, heterotetramer that consists of two anti-parallel arranged heterodimers, each one formed by a 17 kDa (p17) and a 12 kDa (p12) subunit.

The protein resides in the cytoplasm. It catalyses the reaction Strict requirement for an Asp residue at positions P1 and P4. It has a preferred cleavage sequence of Asp-Xaa-Xaa-Asp-|- with a hydrophobic amino-acid residue at P2 and a hydrophilic amino-acid residue at P3, although Val or Ala are also accepted at this position.. Its function is as follows. Important mediator of apoptosis. At the onset of apoptosis, it proteolytically cleaves poly(ADP-ribose) polymerase PARP1 at a '216-Asp-|-Gly-217' bond. This Xenopus laevis (African clawed frog) protein is Caspase-3 (casp3).